We begin with the raw amino-acid sequence, 576 residues long: 9-cis-epoxycarotenoid dioxygenase NCED2, chloroplastic (576 aa).

A chloroplast-targeting transit peptide spans 1 to 34 (MEVPIAAMTFAHPANVMTLASRQPKSKRSHISPA). The Fe cation site is built by H270, H319, H385, and H563.

Belongs to the carotenoid oxygenase family. It depends on Fe(2+) as a cofactor.

It localises to the plastid. Its subcellular location is the chloroplast. The catalysed reaction is a 9-cis-epoxycarotenoid + O2 = a 12'-apo-carotenal + 2-cis,4-trans-xanthoxin. It carries out the reaction 9-cis-violaxanthin + O2 = (3S,5R,6S)-5,6-epoxy-3-hydroxy-5,6-dihydro-12'-apo-beta-caroten-12'-al + 2-cis,4-trans-xanthoxin. The enzyme catalyses 9'-cis-neoxanthin + O2 = (3S,5R,6R)-3,5-dihydroxy-6,7-didehydro-5,6-dihydro-12'-apo-beta-caroten-12'-al + 2-cis,4-trans-xanthoxin. In terms of biological role, has a 11,12(11',12') 9-cis epoxycarotenoid cleavage activity. Catalyzes the first step of abscisic-acid biosynthesis from carotenoids. This Oryza sativa subsp. japonica (Rice) protein is 9-cis-epoxycarotenoid dioxygenase NCED2, chloroplastic.